Consider the following 189-residue polypeptide: Probable transcriptional regulator Rv1176c (189 aa).

Belongs to the PadR family. As to quaternary structure, homodimer.

It localises to the cytoplasm. Functionally, probable transcriptional regulator that may help mitigate the effect of oxidative stress and help mycobacteria survive inside macrophages. Binds to its own promoter region. This Mycobacterium tuberculosis (strain ATCC 25618 / H37Rv) protein is Probable transcriptional regulator Rv1176c.